The following is a 154-amino-acid chain: MPKQIEIFTDGSCLGNPGAGGIGAVLRYKQHEKTLSKGYFQTTNNRMELRAVIEALNTLKEPCLITLYSDSQYMKNGITKWIFNWKKNNWKASSGKPVKNQDLWIALDESIQRHKINWQWVKGHAGHRENEICDELAKKGAENPTLEDMGYIEE.

The 142-residue stretch at 1-142 folds into the RNase H type-1 domain; it reads MPKQIEIFTD…CDELAKKGAE (142 aa). Residues Asp-10, Glu-48, Asp-70, and Asp-134 each coordinate Mg(2+).

Belongs to the RNase H family. In terms of assembly, monomer. Mg(2+) serves as cofactor.

It localises to the cytoplasm. It catalyses the reaction Endonucleolytic cleavage to 5'-phosphomonoester.. In terms of biological role, endonuclease that specifically degrades the RNA of RNA-DNA hybrids. The polypeptide is Ribonuclease HI (rnhA) (Haemophilus influenzae (strain ATCC 51907 / DSM 11121 / KW20 / Rd)).